The primary structure comprises 878 residues: Aminopeptidase M1-C (878 aa).

Positions 102-209 (LGEGVLAMDF…MSTYLVAIVV (108 aa)) are required for membrane association. Residues glutamate 142 and 275–279 (GAMEN) each bind substrate. Position 311 (histidine 311) interacts with Zn(2+). Glutamate 312 (proton acceptor) is an active-site residue. Positions 315 and 334 each coordinate Zn(2+). Positions 726-727 (LL) match the Dileucine internalization motif motif.

Belongs to the peptidase M1 family. As to quaternary structure, homodimer. Zn(2+) serves as cofactor.

The protein resides in the membrane. Its subcellular location is the microsome membrane. The protein localises to the cytoplasm. It catalyses the reaction Release of an N-terminal amino acid, Xaa-|-Yaa- from a peptide, amide or arylamide. Xaa is preferably Ala, but may be most amino acids including Pro (slow action). When a terminal hydrophobic residue is followed by a prolyl residue, the two may be released as an intact Xaa-Pro dipeptide.. The protein is Aminopeptidase M1-C of Oryza sativa subsp. japonica (Rice).